A 1100-amino-acid polypeptide reads, in one-letter code: MLERIQQLVNAVNDPRSDVATKRQAIELLNGIKSSENALEIFISLVINENSNDLLKFYGLSTLIELMTEGVNANPNGLNLVKFEITKWLKFQVLGNKQTKLPDFLMNKISEVLTTLFMLMYSDCNGNQWNSFFDDLMSLFQVDSAISNTSPSTDGNILLGLEFFNKLCLMINSEIADQSFIRSKESQLKNNNIKDWMRDNDIMKLSNVWFQCLKLDEQIVSQCPGLINSTLDCIGSFISWIDINLIIDANNYYLQLIYKFLNLKETKISCYNCILAIISKKMKPMDKLAFLNMINLTNELTYYHQAISMNPQIITFDNLEVWESLTKLITSFGIEFTIIIEQVNDDQKLDTLYKQSVISNVDSILLEKIIPILLEFMNNEFDSITAKTFPFWSNYLAFLKKYKASSPNFVPLHKDFLDNFQQICFKRMKFSDDEVTQDDFEEFNETVRFKLKNFQEIIVVIDPSLFLNNISQEISANLMNCKNESWQIFELTIYQIFNLSECTKNNYFGLNKNEIMTSQPSLTLVRFLNELLMMKDFLLAIDNEQIQILFMELIVKNYNFIFSTSANTANATDDDEKYLLILNIFMSSFAMFNKRENVRLRSWYLFTRFLKLTRINLKKILFANKNLVNEITNKISPLLHIKVTSINAQGTDDNDTIFDNQLYIFEGIGFIITLNNSSQELTAATANTPIDYDILDQILTPLFTQLEGCITQGASPVVILECHHILMAIGTLARGLHIGLVPENQVNNMVVNKKLINDSLIHKFSNIAEVILVTFSFFNKFENIRDASRFTFARLIPILSNKILPFINKLIELILSSTDLKSWEMIDFLGFLSQLIHMFHTDTDCYQLFNQLLTPLINKVHSIIEEIDEQHDQQSSSNKPIDTAVTATSVNKNIVVTDSYRDKILLKKAYCTFLQSFTNNSVTSILLSDINRAILPVILNDLVTYTPQEIQETSMMKVSLNVLCNFIKCFGNGTCLDNDDINKDPNLKIDGLNEYFIMKCVPIIFEIPFNPIYKFNIKEGNFKTMAYDLARLLRELFIVSSNPTTNENECVKYLTQIYLPQIQLPQELTIQLVNMLTTMGQKQFEKWFVDNFISVLKQGQ.

Belongs to the exportin family. In terms of assembly, interacts with CEX1, GSP1, GSP2, NSP1, NUP2 and UTP8.

The protein resides in the nucleus. It is found in the cytoplasm. TRNA nucleus export receptor which facilitates tRNA translocation across the nuclear pore complex. Preferentially interacts with tRNAs with mature 5'- and 3'-termini and does not distinguish between intron-containing and spliced tRNAs. In the nucleus binds to tRNA and to the Ran-GTPases GSP1 or GSP2 in their active GTP-bound form. Docking of this trimeric complex to the nuclear pore complex (NPC) is mediated through binding to nucleoporins. Upon transit of a nuclear export complex into the cytoplasm, disassembling of the complex and hydrolysis of Ran-GTP to Ran-GDP cause release of the tRNA from the export receptor. The directionality of nuclear export is thought to be conferred by an asymmetric distribution of the GTP- and GDP-bound forms of Ran between the cytoplasm and nucleus. The sequence is that of Exportin-T (LOS1) from Saccharomyces cerevisiae (strain ATCC 204508 / S288c) (Baker's yeast).